The primary structure comprises 66 residues: Large ribosomal subunit protein uL29 (66 aa).

Belongs to the universal ribosomal protein uL29 family.

The sequence is that of Large ribosomal subunit protein uL29 from Borrelia garinii subsp. bavariensis (strain ATCC BAA-2496 / DSM 23469 / PBi) (Borreliella bavariensis).